The primary structure comprises 240 residues: Manganese transport system ATP-binding protein MntB (240 aa).

The ABC transporter domain occupies 1–233; it reads MEIQGLTIAY…KIQFAYGDAP (233 aa). 33 to 40 lines the ATP pocket; that stretch reads GPNGAGKS.

Belongs to the ABC transporter superfamily.

It is found in the cell membrane. In terms of biological role, this protein is probably a component of a manganese permease, a binding protein-dependent, ATP-driven transport system. Probably responsible for energy coupling to the transport system. In Listeria monocytogenes serovar 1/2a (strain ATCC BAA-679 / EGD-e), this protein is Manganese transport system ATP-binding protein MntB (mntB).